Here is a 447-residue protein sequence, read N- to C-terminus: N-succinylarginine dihydrolase (447 aa).

Substrate is bound by residues 19 to 28 (AGLSFGNEAS), asparagine 110, and 137 to 138 (HR). Residue glutamate 174 is part of the active site. Arginine 214 is a binding site for substrate. The active site involves histidine 250. Aspartate 252 and asparagine 365 together coordinate substrate. Cysteine 371 functions as the Nucleophile in the catalytic mechanism.

This sequence belongs to the succinylarginine dihydrolase family. In terms of assembly, homodimer.

The enzyme catalyses N(2)-succinyl-L-arginine + 2 H2O + 2 H(+) = N(2)-succinyl-L-ornithine + 2 NH4(+) + CO2. The protein operates within amino-acid degradation; L-arginine degradation via AST pathway; L-glutamate and succinate from L-arginine: step 2/5. Functionally, catalyzes the hydrolysis of N(2)-succinylarginine into N(2)-succinylornithine, ammonia and CO(2). This chain is N-succinylarginine dihydrolase, found in Acinetobacter baumannii (strain ATCC 17978 / DSM 105126 / CIP 53.77 / LMG 1025 / NCDC KC755 / 5377).